Reading from the N-terminus, the 156-residue chain is U4/U6.U5 small nuclear ribonucleoprotein 27 kDa protein (156 aa).

Residues 1-98 (MGRSRSRSPE…IAAEDLEGKT (98 aa)) form a disordered region. Residues 13-59 (RERRRSRSASRERERRRRERSRSRERRRSRSRSPHRRRSRSPRRHRS) show a composition bias toward basic residues. Residues 66–98 (RLKDRRDDDKKDSKESKGAKERQIAAEDLEGKT) show a composition bias toward basic and acidic residues.

Belongs to the SNUT3 family. As to quaternary structure, part of a tri-snRNP complex.

It is found in the nucleus. May play a role in mRNA splicing. The protein is U4/U6.U5 small nuclear ribonucleoprotein 27 kDa protein (snrnp27) of Xenopus tropicalis (Western clawed frog).